Consider the following 621-residue polypeptide: UvrABC system protein C (621 aa).

The region spanning 20–98 is the GIY-YIG domain; it reads TAPGVYRMYA…IKSLTPRYNV (79 aa). In terms of domain architecture, UVR spans 207–242; the sequence is DLLAEELIQAMQVASEHLEFEQAARLRDLLTSLRSM.

The protein belongs to the UvrC family. Interacts with UvrB in an incision complex.

It is found in the cytoplasm. Functionally, the UvrABC repair system catalyzes the recognition and processing of DNA lesions. UvrC both incises the 5' and 3' sides of the lesion. The N-terminal half is responsible for the 3' incision and the C-terminal half is responsible for the 5' incision. The polypeptide is UvrABC system protein C (Xylella fastidiosa (strain M23)).